The primary structure comprises 496 residues: Alpha-amylase (496 aa).

A disulfide bridge links Cys-29 with Cys-85. Positions 99, 155, and 164 each coordinate Ca(2+). Arg-192 lines the chloride pocket. Asp-194 (nucleophile) is an active-site residue. His-198 is a binding site for Ca(2+). The active-site Proton donor is Glu-230. Arg-332 provides a ligand contact to chloride. 2 cysteine pairs are disulfide-bonded: Cys-374–Cys-380 and Cys-448–Cys-460.

It belongs to the glycosyl hydrolase 13 family. As to quaternary structure, monomer. Ca(2+) is required as a cofactor. Chloride serves as cofactor. In terms of processing, disulfide bonds are present.

It is found in the secreted. The catalysed reaction is Endohydrolysis of (1-&gt;4)-alpha-D-glucosidic linkages in polysaccharides containing three or more (1-&gt;4)-alpha-linked D-glucose units.. With respect to regulation, inhibited by alpha-amylase inhibitors from wheat and rye. The most effective inhibitors are the wheat tetrameric alpha-amylase inhibitor (WTAI) and the rye dimeric alpha-amylase inhibitor (RDAI-1). Not inhibited by alpha-amylase inhibitor from barley. In terms of biological role, aids in the digestion of starch and glycogen derived from food, such as skin scales, fungi and bacteria. The sequence is that of Alpha-amylase from Dermatophagoides pteronyssinus (European house dust mite).